We begin with the raw amino-acid sequence, 264 residues long: Thymidylate synthase (264 aa).

Arg21 contacts dUMP. His51 lines the (6R)-5,10-methylene-5,6,7,8-tetrahydrofolate pocket. DUMP is bound at residue 126 to 127 (RR). Cys146 acts as the Nucleophile in catalysis. DUMP-binding positions include 166-169 (RSAD), Asn177, and 207-209 (HLY). Residue Asp169 coordinates (6R)-5,10-methylene-5,6,7,8-tetrahydrofolate. Residue Ala263 coordinates (6R)-5,10-methylene-5,6,7,8-tetrahydrofolate.

It belongs to the thymidylate synthase family. Bacterial-type ThyA subfamily. In terms of assembly, homodimer.

It is found in the cytoplasm. The catalysed reaction is dUMP + (6R)-5,10-methylene-5,6,7,8-tetrahydrofolate = 7,8-dihydrofolate + dTMP. It functions in the pathway pyrimidine metabolism; dTTP biosynthesis. Functionally, catalyzes the reductive methylation of 2'-deoxyuridine-5'-monophosphate (dUMP) to 2'-deoxythymidine-5'-monophosphate (dTMP) while utilizing 5,10-methylenetetrahydrofolate (mTHF) as the methyl donor and reductant in the reaction, yielding dihydrofolate (DHF) as a by-product. This enzymatic reaction provides an intracellular de novo source of dTMP, an essential precursor for DNA biosynthesis. This Hyphomonas neptunium (strain ATCC 15444) protein is Thymidylate synthase.